The following is a 113-amino-acid chain: MAGFGLPNFGQLTEAFKKAQEIQQNAQALQDELDGMEIEGKSADGRASVWLSGNQQPLRVRLDPELLSAGQETCEAATLEALQAAYEQSTATMKGRMEELTGGLNLNLPGMGG.

It belongs to the YbaB/EbfC family. As to quaternary structure, homodimer.

It is found in the cytoplasm. Its subcellular location is the nucleoid. Its function is as follows. Binds to DNA and alters its conformation. May be involved in regulation of gene expression, nucleoid organization and DNA protection. This chain is Nucleoid-associated protein SYNW0027, found in Parasynechococcus marenigrum (strain WH8102).